The following is a 430-amino-acid chain: Gamma-glutamyl phosphate reductase (430 aa).

The protein belongs to the gamma-glutamyl phosphate reductase family.

Its subcellular location is the cytoplasm. The catalysed reaction is L-glutamate 5-semialdehyde + phosphate + NADP(+) = L-glutamyl 5-phosphate + NADPH + H(+). It functions in the pathway amino-acid biosynthesis; L-proline biosynthesis; L-glutamate 5-semialdehyde from L-glutamate: step 2/2. In terms of biological role, catalyzes the NADPH-dependent reduction of L-glutamate 5-phosphate into L-glutamate 5-semialdehyde and phosphate. The product spontaneously undergoes cyclization to form 1-pyrroline-5-carboxylate. This chain is Gamma-glutamyl phosphate reductase, found in Polaromonas naphthalenivorans (strain CJ2).